We begin with the raw amino-acid sequence, 218 residues long: Putative glutamine transport system permease protein GlnP (218 aa).

In terms of domain architecture, ABC transmembrane type-1 spans 19–208 (TLVTLKYSII…ILVMLISFIA (190 aa)). 4 consecutive transmembrane segments (helical) span residues 25–45 (YSIIAVILGLVIGMLLAICKV), 57–79 (FYTSIFRGTPLLVQLSIIYFAAP), 86–108 (FSVFMAGVISFALNSGAYVSEVI), and 187–207 (FFPMLIAACCYYILVMLISFI).

It belongs to the binding-protein-dependent transport system permease family. HisMQ subfamily.

The protein localises to the cell inner membrane. Part of the binding-protein-dependent transport system for glutamine; probably responsible for the translocation of the substrate across the membrane. This is Putative glutamine transport system permease protein GlnP (glnP) from Rickettsia typhi (strain ATCC VR-144 / Wilmington).